We begin with the raw amino-acid sequence, 286 residues long: 4-diphosphocytidyl-2-C-methyl-D-erythritol kinase (286 aa).

K10 is a catalytic residue. An ATP-binding site is contributed by 94-104; that stretch reads PVAAGLAGGSS. The active site involves D136.

This sequence belongs to the GHMP kinase family. IspE subfamily.

The enzyme catalyses 4-CDP-2-C-methyl-D-erythritol + ATP = 4-CDP-2-C-methyl-D-erythritol 2-phosphate + ADP + H(+). It participates in isoprenoid biosynthesis; isopentenyl diphosphate biosynthesis via DXP pathway; isopentenyl diphosphate from 1-deoxy-D-xylulose 5-phosphate: step 3/6. In terms of biological role, catalyzes the phosphorylation of the position 2 hydroxy group of 4-diphosphocytidyl-2C-methyl-D-erythritol. The polypeptide is 4-diphosphocytidyl-2-C-methyl-D-erythritol kinase (Exiguobacterium sibiricum (strain DSM 17290 / CCUG 55495 / CIP 109462 / JCM 13490 / 255-15)).